The sequence spans 21 residues: Fibrinogen beta chain (21 aa).

The span at 1–11 shows a compositional bias: acidic residues; the sequence is EFPTDYDEGED. The tract at residues 1 to 21 is disordered; the sequence is EFPTDYDEGEDDRPKVGLGAR. Sulfotyrosine is present on Tyr-6.

In terms of assembly, heterohexamer; disulfide linked. Contains 2 sets of 3 non-identical chains (alpha, beta and gamma). The 2 heterotrimers are in head to head conformation with the N-termini in a small central domain. Post-translationally, conversion of fibrinogen to fibrin is triggered by thrombin, which cleaves fibrinopeptides A and B from alpha and beta chains, and thus exposes the N-terminal polymerization sites responsible for the formation of the soft clot.

It is found in the secreted. In terms of biological role, cleaved by the protease thrombin to yield monomers which, together with fibrinogen alpha (FGA) and fibrinogen gamma (FGG), polymerize to form an insoluble fibrin matrix. Fibrin has a major function in hemostasis as one of the primary components of blood clots. In addition, functions during the early stages of wound repair to stabilize the lesion and guide cell migration during re-epithelialization. Was originally thought to be essential for platelet aggregation, based on in vitro studies using anticoagulated blood. However subsequent studies have shown that it is not absolutely required for thrombus formation in vivo. Enhances expression of SELP in activated platelets. Maternal fibrinogen is essential for successful pregnancy. Fibrin deposition is also associated with infection, where it protects against IFNG-mediated hemorrhage. May also facilitate the antibacterial immune response via both innate and T-cell mediated pathways. This Bison bonasus (European bison) protein is Fibrinogen beta chain (FGB).